Consider the following 324-residue polypeptide: Beta-ketoacyl-[acyl-carrier-protein] synthase III (324 aa).

Residues Cys-113 and His-251 contribute to the active site. The tract at residues 252–256 (QANKR) is ACP-binding. Asn-281 is an active-site residue.

It belongs to the thiolase-like superfamily. FabH family. In terms of assembly, homodimer.

The protein localises to the cytoplasm. The enzyme catalyses malonyl-[ACP] + acetyl-CoA + H(+) = 3-oxobutanoyl-[ACP] + CO2 + CoA. It participates in lipid metabolism; fatty acid biosynthesis. Functionally, catalyzes the condensation reaction of fatty acid synthesis by the addition to an acyl acceptor of two carbons from malonyl-ACP. Catalyzes the first condensation reaction which initiates fatty acid synthesis and may therefore play a role in governing the total rate of fatty acid production. Possesses both acetoacetyl-ACP synthase and acetyl transacylase activities. Its substrate specificity determines the biosynthesis of branched-chain and/or straight-chain of fatty acids. The chain is Beta-ketoacyl-[acyl-carrier-protein] synthase III from Bartonella tribocorum (strain CIP 105476 / IBS 506).